A 669-amino-acid polypeptide reads, in one-letter code: Protein adenylyltransferase SelO, mitochondrial (669 aa).

Residues 1-115 constitute a mitochondrion transit peptide; sequence MAVYRAALGA…LGLGAPPARE (115 aa). Residues glycine 153, glycine 155, lysine 176, aspartate 188, glycine 189, arginine 246, and arginine 253 each contribute to the ATP site. The active-site Proton acceptor is the aspartate 338. Residues asparagine 339 and aspartate 348 each contribute to the Mg(2+) site. Aspartate 348 serves as a coordination point for ATP. The interval 634–654 is disordered; it reads ATDAEATEADGADGRQRSYSS. Threonine 635 carries the post-translational modification Phosphothreonine. Residue serine 653 is modified to Phosphoserine. Position 667 (selenocysteine 667) is a non-standard amino acid, selenocysteine.

This sequence belongs to the SELO family. It depends on Mg(2+) as a cofactor.

It is found in the mitochondrion. The catalysed reaction is L-tyrosyl-[protein] + ATP = O-(5'-adenylyl)-L-tyrosyl-[protein] + diphosphate. It catalyses the reaction L-threonyl-[protein] + ATP = 3-O-(5'-adenylyl)-L-threonyl-[protein] + diphosphate. The enzyme catalyses L-seryl-[protein] + ATP = 3-O-(5'-adenylyl)-L-seryl-[protein] + diphosphate. In terms of biological role, catalyzes the transfer of adenosine 5'-monophosphate (AMP) to Ser, Thr and Tyr residues of target proteins (AMPylation). May be a redox-active mitochondrial selenoprotein which interacts with a redox target protein. The sequence is that of Protein adenylyltransferase SelO, mitochondrial from Homo sapiens (Human).